The primary structure comprises 341 residues: Eukaryotic translation initiation factor 3 subunit I (341 aa).

6 WD repeats span residues glycine 8 to threonine 47, glycine 56 to threonine 95, leucine 151 to alanine 190, glutamate 194 to valine 233, threonine 235 to glutamate 274, and glycine 291 to proline 331.

Belongs to the eIF-3 subunit I family. Component of the eukaryotic translation initiation factor 3 (eIF-3) complex.

Its subcellular location is the cytoplasm. Functionally, component of the eukaryotic translation initiation factor 3 (eIF-3) complex, which is involved in protein synthesis of a specialized repertoire of mRNAs and, together with other initiation factors, stimulates binding of mRNA and methionyl-tRNAi to the 40S ribosome. The eIF-3 complex specifically targets and initiates translation of a subset of mRNAs involved in cell proliferation. This chain is Eukaryotic translation initiation factor 3 subunit I, found in Cryptococcus neoformans var. neoformans serotype D (strain B-3501A) (Filobasidiella neoformans).